Reading from the N-terminus, the 159-residue chain is 2-C-methyl-D-erythritol 2,4-cyclodiphosphate synthase (159 aa).

A divalent metal cation-binding residues include Asp-10 and His-12. 4-CDP-2-C-methyl-D-erythritol 2-phosphate is bound by residues 10–12 and 36–37; these read DVH and HS. His-44 contacts a divalent metal cation. Residues 58 to 60, 63 to 67, and Arg-144 contribute to the 4-CDP-2-C-methyl-D-erythritol 2-phosphate site; these read DIG and FSDTD.

Belongs to the IspF family. In terms of assembly, homotrimer. A divalent metal cation serves as cofactor.

It carries out the reaction 4-CDP-2-C-methyl-D-erythritol 2-phosphate = 2-C-methyl-D-erythritol 2,4-cyclic diphosphate + CMP. It participates in isoprenoid biosynthesis; isopentenyl diphosphate biosynthesis via DXP pathway; isopentenyl diphosphate from 1-deoxy-D-xylulose 5-phosphate: step 4/6. Its function is as follows. Involved in the biosynthesis of isopentenyl diphosphate (IPP) and dimethylallyl diphosphate (DMAPP), two major building blocks of isoprenoid compounds. Catalyzes the conversion of 4-diphosphocytidyl-2-C-methyl-D-erythritol 2-phosphate (CDP-ME2P) to 2-C-methyl-D-erythritol 2,4-cyclodiphosphate (ME-CPP) with a corresponding release of cytidine 5-monophosphate (CMP). The sequence is that of 2-C-methyl-D-erythritol 2,4-cyclodiphosphate synthase from Paraburkholderia xenovorans (strain LB400).